Consider the following 225-residue polypeptide: MTIQGSDRKGTLLLLVMSNLLFCQNVHPLPICHSGNCQMTLQELFDRVIMLSHYVYMMSADMFIEFEKRYAQDHEFIAKAINDCPTSSLATPEDKEEAQQVPPEVLLNLILSLVHSWNGPLFQLVTEVDGIHEASDAIISRAKEIGEQNKRLLEGIEKILGQAYPEAKGNEVYSVWSQFPSLQGIDEESRDLALYNKIRCLRRDSHKVDNYLKLLRCRIVHNNNC.

The first 28 residues, 1–28 (MTIQGSDRKGTLLLLVMSNLLFCQNVHP), serve as a signal peptide directing secretion. Cysteines 32 and 37 form a disulfide. Residues Ser52 and Ser116 each carry the phosphoserine modification. 2 disulfide bridges follow: Cys84–Cys200 and Cys217–Cys225.

It belongs to the somatotropin/prolactin family. Interacts with PRLR.

It localises to the secreted. Its function is as follows. Prolactin acts primarily on the mammary gland by promoting lactation. The protein is Prolactin (PRL) of Alexandromys montebelli (Japanese grass vole).